The primary structure comprises 635 residues: Cytoplasmic polyadenylation element-binding protein 4 (635 aa).

3 disordered regions span residues 1 to 70, 149 to 284, and 337 to 369; these read MQDD…TLRL, GFGG…GFNT, and LFPM…PHQN. Residues 14–30 show a composition bias toward polar residues; the sequence is PQLQQESQEGQDKQTLS. The segment covering 166 to 182 has biased composition (basic residues); sequence PSPHPHFQHPHNQHRRS. Residues 216 to 231 are compositionally biased toward low complexity; that stretch reads GSYQSPSSTPSSTSWS. Positions 232–241 are enriched in gly residues; the sequence is PGGGYGGWGS. A compositionally biased stretch (polar residues) spans 254–283; the sequence is PLNSISPLKKSFPNNQTQTQKYPRNNSGFN. Positions 341-353 are enriched in basic and acidic residues; it reads EDERSYGEDERSD. RRM domains follow at residues 378–469 and 486–568; these read RKVF…PWNL and KTIF…PYVL.

This sequence belongs to the RRM CPEB family.

The protein localises to the cytoplasm. It is found in the cell projection. Its subcellular location is the dendrite. The protein resides in the dendritic spine. It localises to the postsynaptic density. The protein localises to the axon. It is found in the growth cone. Its subcellular location is the endoplasmic reticulum. The protein resides in the perinuclear region. In terms of biological role, sequence-specific RNA-binding protein that binds to the cytoplasmic polyadenylation element (CPE), an uridine-rich sequence element (consensus sequence 5'-UUUUUAU-3') within the mRNA 3'-UTR. RNA binding results in a clear conformational change analogous to the Venus fly trap mechanism. The protein is Cytoplasmic polyadenylation element-binding protein 4 (cpeb4) of Danio rerio (Zebrafish).